The sequence spans 98 residues: Mu-type opioid receptor (98 aa).

At 1–9 the chain is on the cytoplasmic side; that stretch reads YTKMKTATN. A helical transmembrane segment spans residues 10-34; sequence IYIFNLALADALATSTLPFQSVNYL. The Extracellular portion of the chain corresponds to 35 to 45; it reads MGTWPFGTILC. A helical transmembrane segment spans residues 46–68; it reads KIVISIDYYNMFTSIFTLCTMSV. Over 69–88 the chain is Cytoplasmic; the sequence is DRYIAVCHPVKALDFRTPRN. Phosphotyrosine is present on Tyr71. A helical membrane pass occupies residues 89–98; sequence AKTVNVCNWI.

The protein belongs to the G-protein coupled receptor 1 family. In terms of assembly, forms homooligomers and heterooligomers with other GPCRs, such as OPRD1, OPRK1, OPRL1, NPFFR2, ADRA2A, SSTR2, CNR1 and CCR5 (probably in dimeric forms). Interacts with heterotrimeric G proteins; interaction with a heterotrimeric complex containing GNAI1, GNB1 and GNG2 stabilizes the active conformation of the receptor and increases its affinity for endomorphin-2, the synthetic opioid peptide DAMGO and for morphinan agonists. Interacts with PPL; the interaction disrupts agonist-mediated G-protein activation. Interacts (via C-terminus) with DNAJB4 (via C-terminus). Interacts with calmodulin; the interaction inhibits the constitutive activity of OPRM1; it abolishes basal and attenuates agonist-stimulated G-protein coupling. Interacts with FLNA, PLD2, RANBP9 and WLS and GPM6A. Interacts with RTP4. Interacts with SYP and GNAS. Interacts with RGS9, RGS17, RGS20, RGS4, PPP1R9B and HINT1. Phosphorylated. Differentially phosphorylated in basal and agonist-induced conditions. Agonist-mediated phosphorylation modulates receptor internalization. Phosphorylated by GRK2 in a agonist-dependent manner. Phosphorylated on tyrosine residues; the phosphorylation is involved in agonist-induced G-protein-independent receptor down-regulation. In terms of processing, phosphorylated. Differentially phosphorylated in basal and agonist-induced conditions. Agonist-mediated phosphorylation modulates receptor internalization. Phosphorylated by GRK2 in a agonist-dependent manner. Phosphorylated on tyrosine residues; the phosphorylation is involved in agonist-induced G-protein-independent receptor down-regulation. Post-translationally, ubiquitinated. A basal ubiquitination seems not to be related to degradation. Ubiquitination is increased upon formation of OPRM1:OPRD1 oligomers leading to proteasomal degradation; the ubiquitination is diminished by RTP4.

It is found in the cell membrane. Its subcellular location is the cell projection. The protein resides in the axon. It localises to the perikaryon. The protein localises to the dendrite. It is found in the endosome. Receptor for endogenous opioids such as beta-endorphin and endomorphin. Receptor for natural and synthetic opioids including morphine, heroin, DAMGO, fentanyl, etorphine, buprenorphin and methadone. Also activated by enkephalin peptides, such as Met-enkephalin or Met-enkephalin-Arg-Phe, with higher affinity for Met-enkephalin-Arg-Phe. Agonist binding to the receptor induces coupling to an inactive GDP-bound heterotrimeric G-protein complex and subsequent exchange of GDP for GTP in the G-protein alpha subunit leading to dissociation of the G-protein complex with the free GTP-bound G-protein alpha and the G-protein beta-gamma dimer activating downstream cellular effectors. The agonist- and cell type-specific activity is predominantly coupled to pertussis toxin-sensitive G(i) and G(o) G alpha proteins, GNAI1, GNAI2, GNAI3 and GNAO1, and to a lesser extent to pertussis toxin-insensitive G alpha proteins GNAZ and GNA15. They mediate an array of downstream cellular responses, including inhibition of adenylate cyclase activity and both N-type and L-type calcium channels, activation of inward rectifying potassium channels, mitogen-activated protein kinase (MAPK), phospholipase C (PLC), phosphoinositide/protein kinase (PKC), phosphoinositide 3-kinase (PI3K) and regulation of NF-kappa-B. Also couples to adenylate cyclase stimulatory G alpha proteins. The selective temporal coupling to G-proteins and subsequent signaling can be regulated by RGSZ proteins, such as RGS9, RGS17 and RGS4. Phosphorylation by members of the GPRK subfamily of Ser/Thr protein kinases and association with beta-arrestins is involved in short-term receptor desensitization. Beta-arrestins associate with the GPRK-phosphorylated receptor and uncouple it from the G-protein thus terminating signal transduction. The phosphorylated receptor is internalized through endocytosis via clathrin-coated pits which involves beta-arrestins. The activation of the ERK pathway occurs either in a G-protein-dependent or a beta-arrestin-dependent manner and is regulated by agonist-specific receptor phosphorylation. Acts as a class A G-protein coupled receptor (GPCR) which dissociates from beta-arrestin at or near the plasma membrane and undergoes rapid recycling. Receptor down-regulation pathways are varying with the agonist and occur dependent or independent of G-protein coupling. Endogenous ligands induce rapid desensitization, endocytosis and recycling. Heterooligomerization with other GPCRs can modulate agonist binding, signaling and trafficking properties. Involved in neurogenesis. The sequence is that of Mu-type opioid receptor (OPRM1) from Cavia porcellus (Guinea pig).